Here is a 564-residue protein sequence, read N- to C-terminus: Dihydroxy-acid dehydratase (564 aa).

A [2Fe-2S] cluster-binding site is contributed by cysteine 55. Aspartate 87 contacts Mg(2+). Cysteine 128 contributes to the [2Fe-2S] cluster binding site. Mg(2+) contacts are provided by aspartate 129 and lysine 130. N6-carboxylysine is present on lysine 130. [2Fe-2S] cluster is bound at residue cysteine 200. A Mg(2+)-binding site is contributed by glutamate 452. Serine 478 functions as the Proton acceptor in the catalytic mechanism.

Belongs to the IlvD/Edd family. Homodimer. It depends on [2Fe-2S] cluster as a cofactor. Mg(2+) serves as cofactor.

It carries out the reaction (2R)-2,3-dihydroxy-3-methylbutanoate = 3-methyl-2-oxobutanoate + H2O. It catalyses the reaction (2R,3R)-2,3-dihydroxy-3-methylpentanoate = (S)-3-methyl-2-oxopentanoate + H2O. It functions in the pathway amino-acid biosynthesis; L-isoleucine biosynthesis; L-isoleucine from 2-oxobutanoate: step 3/4. Its pathway is amino-acid biosynthesis; L-valine biosynthesis; L-valine from pyruvate: step 3/4. Functionally, functions in the biosynthesis of branched-chain amino acids. Catalyzes the dehydration of (2R,3R)-2,3-dihydroxy-3-methylpentanoate (2,3-dihydroxy-3-methylvalerate) into 2-oxo-3-methylpentanoate (2-oxo-3-methylvalerate) and of (2R)-2,3-dihydroxy-3-methylbutanoate (2,3-dihydroxyisovalerate) into 2-oxo-3-methylbutanoate (2-oxoisovalerate), the penultimate precursor to L-isoleucine and L-valine, respectively. The chain is Dihydroxy-acid dehydratase from Polaromonas naphthalenivorans (strain CJ2).